The chain runs to 296 residues: Glutamate 5-kinase (296 aa).

Residue lysine 15 coordinates ATP. Substrate contacts are provided by serine 55, aspartate 159, and asparagine 186. ATP-binding positions include 206-207 (SD) and 248-254 (TGGIATK).

The protein belongs to the glutamate 5-kinase family.

Its subcellular location is the cytoplasm. It carries out the reaction L-glutamate + ATP = L-glutamyl 5-phosphate + ADP. It functions in the pathway amino-acid biosynthesis; L-proline biosynthesis; L-glutamate 5-semialdehyde from L-glutamate: step 1/2. Its function is as follows. Catalyzes the transfer of a phosphate group to glutamate to form L-glutamate 5-phosphate. The sequence is that of Glutamate 5-kinase from Treponema pallidum (strain Nichols).